The chain runs to 356 residues: GDP-mannose:di-myo-inositol-1,3'-phosphate beta-1,2-mannosyltransferase (356 aa).

Belongs to the MDIP synthase family. Requires Mg(2+) as cofactor.

It carries out the reaction bis(myo-inositol) 1,3'-phosphate + GDP-alpha-D-mannose = 2-O-(beta-D-mannosyl)-bis(myo-inositol) 1,3'-phosphate + GDP + H(+). The catalysed reaction is 2-O-(beta-D-mannosyl)-bis(myo-inositol) 1,3'-phosphate + GDP-alpha-D-mannose = 2-O-(beta-D-mannosyl-(1-&gt;2)-beta-D-mannosyl)-bis(myo-inositol) 1,3'-phosphate + GDP + H(+). The enzyme catalyses bis(myo-inositol) 1,3'-phosphate + 2 GDP-alpha-D-mannose = 2-O-(beta-D-mannosyl-(1-&gt;2)-beta-D-mannosyl)-bis(myo-inositol) 1,3'-phosphate + 2 GDP + 2 H(+). Its function is as follows. Catalyzes the transfer of the mannosyl group from GDP-mannose to di-myo-inositol-1,3'-phosphate (DIP), producing mannosyl-di-myo-inositol phosphate (MDIP). Can also use MDIP as an acceptor of a second mannose residue, yielding di-mannosyl-di-myo-inositol phosphate (MMDIP). The polypeptide is GDP-mannose:di-myo-inositol-1,3'-phosphate beta-1,2-mannosyltransferase (Aquifex aeolicus (strain VF5)).